Reading from the N-terminus, the 264-residue chain is Zinc finger protein CG30 (264 aa).

Residues Cys8–Arg63 form an RING-type zinc finger.

It is found in the host nucleus. Functionally, plays a role in the proper expression of late and very late genes. The chain is Zinc finger protein CG30 (CG30) from Autographa californica nuclear polyhedrosis virus (AcMNPV).